We begin with the raw amino-acid sequence, 166 residues long: Ribosome maturation factor RimM (166 aa).

Positions 94–166 constitute a PRC barrel domain; the sequence is EDEFYITDLN…AILNYKRDEL (73 aa).

The protein belongs to the RimM family. In terms of assembly, binds ribosomal protein uS19.

The protein localises to the cytoplasm. Functionally, an accessory protein needed during the final step in the assembly of 30S ribosomal subunit, possibly for assembly of the head region. Essential for efficient processing of 16S rRNA. May be needed both before and after RbfA during the maturation of 16S rRNA. It has affinity for free ribosomal 30S subunits but not for 70S ribosomes. This Rickettsia bellii (strain RML369-C) protein is Ribosome maturation factor RimM.